The sequence spans 324 residues: Serpentine receptor class delta-30 (324 aa).

The next 7 membrane-spanning stretches (helical) occupy residues 5–25, 38–58, 83–103, 124–144, 176–196, 227–247, and 258–278; these read IIHSVLSTVGVSLNAFMMYLA, AIITIKTGTDILASIMSFFVM, ACYVGHMLMLCFLEYNLIWMI, VFVAFCLSIPSMVHMAAWFSF, ITLITQLFITAFLVVVAYIWI, FQVFLPSFIFLGVITFASMFT, and AISVIFMFSPICSPFSYILFV. The tract at residues 290-324 is disordered; sequence KQPKPHPEMCGPIRSNTRTTSISVTNNSSHLSSAH. Residues 303-324 are compositionally biased toward polar residues; the sequence is RSNTRTTSISVTNNSSHLSSAH.

Belongs to the nematode receptor-like protein srd family.

The protein localises to the membrane. The polypeptide is Serpentine receptor class delta-30 (srd-30) (Caenorhabditis elegans).